Consider the following 888-residue polypeptide: 3-hydroxy-3-methylglutaryl-coenzyme A reductase (888 aa).

Topologically, residues 1–9 (MLSRLFRMH) are cytoplasmic. A helical membrane pass occupies residues 10-39 (GLFVASHPWEVIVGTVTLTICMMSMNMFTG). Residues 40 to 56 (NDKICGWNYECPKFEED) are Lumenal-facing. Residues 57 to 78 (VLSSDIIILTITRCIAILYIYF) traverse the membrane as a helical segment. The SSD domain maps to 61–218 (DIIILTITRC…MTFFPACVSL (158 aa)). Residues 75-78 (YIYF) carry the INSIG-binding motif motif. Residues 79-89 (QFQNLRQLGSK) lie on the Cytoplasmic side of the membrane. K89 is covalently cross-linked (Glycyl lysine isopeptide (Lys-Gly) (interchain with G-Cter in ubiquitin)). A helical transmembrane segment spans residues 90–114 (YILGIAGLFTIFSSFVFSTVVIHFL). Residues 115–123 (DKELTGLNE) lie on the Lumenal side of the membrane. A helical membrane pass occupies residues 124-149 (ALPFFLLLIDLSRASALAKFALSSNS). Over 150 to 159 (QDEVRENIAR) the chain is Cytoplasmic. Residues 160 to 187 (GMAILGPTFTLDALVECLVIGVGTMSGV) form a helical membrane-spanning segment. At 188–191 (RQLE) the chain is on the lumenal side. A helical transmembrane segment spans residues 192 to 220 (IMCCFGCMSVLANYFVFMTFFPACVSLVL). Residues 221-248 (ELSRESREGRPIWQLSHFARVLEEEENK) lie on the Cytoplasmic side of the membrane. Residue K248 forms a Glycyl lysine isopeptide (Lys-Gly) (interchain with G-Cter in ubiquitin) linkage. The helical transmembrane segment at 249 to 275 (PNPVTQRVKMIMSLGLVLVHAHSRWIA) threads the bilayer. Residues 276–314 (DPSPQNSTADNSKVSLGLDENVSKRIEPSVSLWQFYLSK) are Lumenal-facing. Residues N281 and N296 are each glycosylated (N-linked (GlcNAc...) asparagine). A helical membrane pass occupies residues 315–339 (MISMDIEQVITLSLALLLAVKYIFF). Residues 340–888 (EQAETESTLS…LEGACTKKAA (549 aa)) lie on the Cytoplasmic side of the membrane. Active-site charge relay system residues include E559, K691, and D767. The active-site Proton donor is H866. S872 carries the post-translational modification Phosphoserine; by AMPK.

Belongs to the HMG-CoA reductase family. As to quaternary structure, homotetramer. Homodimer. Interacts (via its SSD) with INSIG1; the interaction, accelerated by sterols, leads to the recruitment of HMGCR to AMFR/gp78 for its ubiquitination by the sterol-mediated ERAD pathway. Interacts with UBIAD1. Post-translationally, undergoes sterol-mediated ubiquitination and ER-associated degradation (ERAD). Accumulation of sterols in the endoplasmic reticulum (ER) membrane, triggers binding of the reductase to the ER membrane protein INSIG1 or INSIG2. The INSIG1 binding leads to the recruitment of the ubiquitin ligase, AMFR/gp78, RNF139 or RNF145, initiating ubiquitination of the reductase. The ubiquitinated reductase is then extracted from the ER membrane and delivered to cytosolic 26S proteosomes by a mechanism probably mediated by the ATPase Valosin-containing protein VCP/p97. The INSIG2-binding leads to the recruitment of the ubiquitin ligase RNF139, initiating ubiquitination of the reductase. Lys-248 is the main site of ubiquitination. Ubiquitination is enhanced by the presence of a geranylgeranylated protein. In terms of processing, N-glycosylated. Deglycosylated by NGLY1 on release from the endoplasmic reticulum (ER) in a sterol-mediated manner. Phosphorylated. Phosphorylation at Ser-872 reduces the catalytic activity.

The protein localises to the endoplasmic reticulum membrane. It localises to the peroxisome membrane. The catalysed reaction is (R)-mevalonate + 2 NADP(+) + CoA = (3S)-3-hydroxy-3-methylglutaryl-CoA + 2 NADPH + 2 H(+). It participates in metabolic intermediate biosynthesis; (R)-mevalonate biosynthesis; (R)-mevalonate from acetyl-CoA: step 3/3. Regulated by a negative feedback mechanism through sterols and non-sterol metabolites derived from mevalonate. Phosphorylation at Ser-872 down-regulates the catalytic activity. Its function is as follows. Catalyzes the conversion of (3S)-hydroxy-3-methylglutaryl-CoA (HMG-CoA) to mevalonic acid, the rate-limiting step in the synthesis of cholesterol and other isoprenoids, thus plays a critical role in cellular cholesterol homeostasis. This Oryctolagus cuniculus (Rabbit) protein is 3-hydroxy-3-methylglutaryl-coenzyme A reductase (HMGCR).